Here is a 208-residue protein sequence, read N- to C-terminus: Uracil phosphoribosyltransferase (208 aa).

Residues arginine 78, arginine 103, and 130–138 each bind 5-phospho-alpha-D-ribose 1-diphosphate; that span reads DPMLATGGS. Residues isoleucine 193 and 198-200 contribute to the uracil site; that span reads GDA. Aspartate 199 is a binding site for 5-phospho-alpha-D-ribose 1-diphosphate.

This sequence belongs to the UPRTase family. Mg(2+) is required as a cofactor.

It catalyses the reaction UMP + diphosphate = 5-phospho-alpha-D-ribose 1-diphosphate + uracil. It functions in the pathway pyrimidine metabolism; UMP biosynthesis via salvage pathway; UMP from uracil: step 1/1. Its activity is regulated as follows. Allosterically activated by GTP. In terms of biological role, catalyzes the conversion of uracil and 5-phospho-alpha-D-ribose 1-diphosphate (PRPP) to UMP and diphosphate. The polypeptide is Uracil phosphoribosyltransferase (Klebsiella pneumoniae (strain 342)).